The sequence spans 144 residues: Large ribosomal subunit protein uL16 (144 aa).

The protein belongs to the universal ribosomal protein uL16 family. As to quaternary structure, part of the 50S ribosomal subunit.

Its function is as follows. Binds 23S rRNA and is also seen to make contacts with the A and possibly P site tRNAs. This chain is Large ribosomal subunit protein uL16, found in Pediococcus pentosaceus (strain ATCC 25745 / CCUG 21536 / LMG 10740 / 183-1w).